An 807-amino-acid chain; its full sequence is Glycerol-3-phosphate acyltransferase (807 aa).

The short motif at 305–310 (CHRSHM) is the HXXXXD motif element.

It belongs to the GPAT/DAPAT family.

It is found in the cell inner membrane. It catalyses the reaction sn-glycerol 3-phosphate + an acyl-CoA = a 1-acyl-sn-glycero-3-phosphate + CoA. It participates in phospholipid metabolism; CDP-diacylglycerol biosynthesis; CDP-diacylglycerol from sn-glycerol 3-phosphate: step 1/3. The chain is Glycerol-3-phosphate acyltransferase from Escherichia coli O139:H28 (strain E24377A / ETEC).